Here is a 176-residue protein sequence, read N- to C-terminus: MDLPGPIHDILLVFLGSGLILGGLGVVLFTTPIYSAFSLGLVFVCISLFYIPSNSYFVAAAQLLIYVGAVNVLIVFAVMFMNGSEYYKDFHLWTVGDGITSLVCTSILFSLITTILETSWYGIIWTTRSNQIIEQDLTSNVQQMGIHLSTDFYLPFELTSIILLVALIGAIAMARQ.

Helical transmembrane passes span 10–30 (ILLV…VLFT), 32–52 (PIYS…FYIP), 61–81 (AQLL…VMFM), 90–112 (FHLW…FSLI), and 152–172 (FYLP…GAIA).

This sequence belongs to the complex I subunit 6 family. NDH is composed of at least 16 different subunits, 5 of which are encoded in the nucleus.

The protein resides in the plastid. The protein localises to the chloroplast thylakoid membrane. It catalyses the reaction a plastoquinone + NADH + (n+1) H(+)(in) = a plastoquinol + NAD(+) + n H(+)(out). It carries out the reaction a plastoquinone + NADPH + (n+1) H(+)(in) = a plastoquinol + NADP(+) + n H(+)(out). Its function is as follows. NDH shuttles electrons from NAD(P)H:plastoquinone, via FMN and iron-sulfur (Fe-S) centers, to quinones in the photosynthetic chain and possibly in a chloroplast respiratory chain. The immediate electron acceptor for the enzyme in this species is believed to be plastoquinone. Couples the redox reaction to proton translocation, and thus conserves the redox energy in a proton gradient. This Ceratophyllum demersum (Rigid hornwort) protein is NAD(P)H-quinone oxidoreductase subunit 6, chloroplastic (ndhG).